Consider the following 225-residue polypeptide: LexA repressor (225 aa).

Positions 26-46 (YEEMKDSLNLKSKSGIHRLIS) form a DNA-binding region, H-T-H motif. Active-site for autocatalytic cleavage activity residues include Ser-146 and Lys-184.

It belongs to the peptidase S24 family. Homodimer.

The enzyme catalyses Hydrolysis of Ala-|-Gly bond in repressor LexA.. Its function is as follows. Represses a number of genes involved in the response to DNA damage (SOS response), including recA and lexA. In the presence of single-stranded DNA, RecA interacts with LexA causing an autocatalytic cleavage which disrupts the DNA-binding part of LexA, leading to derepression of the SOS regulon and eventually DNA repair. The sequence is that of LexA repressor from Pelagibacter ubique (strain HTCC1062).